A 1304-amino-acid chain; its full sequence is NAD-dependent protein deacetylase Sir2B (1304 aa).

A Deacetylase sirtuin-type domain is found at 28–466 (TEEEKKKVKE…LISIHNIKMK (439 aa)). NAD(+)-binding positions include 53 to 72 (GAGI…TGIW) and 274 to 277 (QNID). Histidine 294 acts as the Proton acceptor in catalysis. The Zn(2+) site is built by cysteine 302, cysteine 305, cysteine 327, and cysteine 330. NAD(+) is bound by residues 371–373 (GSS), 399–401 (NYQ), and valine 417. Disordered stretches follow at residues 545-585 (EHNN…SSSI), 749-827 (KVKS…DKDN), and 1154-1203 (EIKY…DDNN). Low complexity-rich tracts occupy residues 548–585 (NNNN…SSSI), 756–806 (NNNN…ISDH), and 1182–1203 (DDNN…DDNN).

The protein belongs to the sirtuin family. Class IV subfamily. Zn(2+) is required as a cofactor.

The enzyme catalyses N(6)-acetyl-L-lysyl-[protein] + NAD(+) + H2O = 2''-O-acetyl-ADP-D-ribose + nicotinamide + L-lysyl-[protein]. Functionally, regulates the expression of the surface antigen-coding var genes central to the malaria pathogenesis. Cooperates with Sir2A to mediate silencing and mutual exclusive expression of only 1 of the 60 subtelomeric var genes at a time, coding for functionally different but epitopically variant versions of the erythrocyte membrane protein 1 (PfEMP1) molecule, to evade the detection by host immune surveillance. This is NAD-dependent protein deacetylase Sir2B from Plasmodium falciparum (isolate 3D7).